Reading from the N-terminus, the 108-residue chain is uncharacterized protein (108 aa).

A helical membrane pass occupies residues 15–37 (SYYFYIFWNFFLPMFIVYRGFGL).

The protein resides in the membrane. This is an uncharacterized protein from Archaeoglobus fulgidus (strain ATCC 49558 / DSM 4304 / JCM 9628 / NBRC 100126 / VC-16).